The following is a 204-amino-acid chain: Pyridoxamine 5'-phosphate oxidase YLR456W homolog (204 aa).

FMN contacts are provided by residues 65-66 (FT) and N127.

This sequence belongs to the pyridoxamine 5'-phosphate oxidase family. Requires FMN as cofactor.

Its subcellular location is the cytoplasm. The protein localises to the nucleus. The sequence is that of Pyridoxamine 5'-phosphate oxidase YLR456W homolog from Saccharomyces cerevisiae (strain ATCC 204508 / S288c) (Baker's yeast).